A 716-amino-acid chain; its full sequence is Putative mannosyltransferase YkcB (716 aa).

8 helical membrane passes run 8–28 (LDIV…YNIW), 44–64 (MMQS…FITV), 87–107 (SVIL…YLLI), 118–135 (IASF…VART), 137–157 (NVDA…FKAI), 159–179 (KGKL…FNTK), 180–200 (MLQA…AANA), and 206–226 (IVSL…WPLI). The interval 260–363 (TGQNSGGGQG…GSGMFGTGTP (104 aa)) is disordered. A compositionally biased stretch (polar residues) spans 278-289 (EMSSSDNTQAPP). Over residues 290–307 (NQSSSNSSSSDGKSSNGN) the composition is skewed to low complexity. A compositionally biased stretch (gly residues) spans 318–347 (PSGGQGGPPSGGDGGQGGPGGDGGKGGTGT). A run of 6 helical transmembrane segments spans residues 376–396 (QISW…IAGA), 409–429 (TVFW…AEFF), 433–453 (YLIM…VALV), 462–482 (WKAW…LFIL), 491–511 (VGWS…LLLF), and 518–538 (FSYY…MYWA). Residues 664–716 (VASEKWQSSSDQKTENTDSADTSSSKASGENGKMGGPGGMNQSATLYELHADE) form a disordered region. The segment covering 680–694 (TDSADTSSSKASGEN) has biased composition (low complexity).

The protein belongs to the glycosyltransferase 39 family.

The protein localises to the cell membrane. The chain is Putative mannosyltransferase YkcB (ykcB) from Bacillus subtilis (strain 168).